A 228-amino-acid chain; its full sequence is 2,3-bisphosphoglycerate-dependent phosphoglycerate mutase (228 aa).

Substrate is bound by residues R8–N15, T21–G22, R60, E87–Y90, K98, R114–R115, and G180–N181. H9 (tele-phosphohistidine intermediate) is an active-site residue. E87 serves as the catalytic Proton donor/acceptor.

This sequence belongs to the phosphoglycerate mutase family. BPG-dependent PGAM subfamily. As to quaternary structure, homodimer.

The enzyme catalyses (2R)-2-phosphoglycerate = (2R)-3-phosphoglycerate. It participates in carbohydrate degradation; glycolysis; pyruvate from D-glyceraldehyde 3-phosphate: step 3/5. Its function is as follows. Catalyzes the interconversion of 2-phosphoglycerate and 3-phosphoglycerate. In Zymomonas mobilis subsp. mobilis (strain ATCC 31821 / ZM4 / CP4), this protein is 2,3-bisphosphoglycerate-dependent phosphoglycerate mutase.